The sequence spans 175 residues: Avenin-like a7 (175 aa).

Positions 1 to 19 (MKTMFILALLAFTATSAVA) are cleaved as a signal peptide.

The protein belongs to the prolamin family. Contains 7 disulfide bonds.

Functionally, seed storage protein. Not integrated in the gluten polymer through disulfide bonds, unless incorporated by reduction and reoxidation during dough making. Increases dough strength and bread volume, but decreases dough stability when added into a base wheat flour. This Triticum aestivum (Wheat) protein is Avenin-like a7.